The chain runs to 282 residues: 2-dehydro-3-deoxyphosphooctonate aldolase (282 aa).

The protein belongs to the KdsA family.

Its subcellular location is the cytoplasm. It carries out the reaction D-arabinose 5-phosphate + phosphoenolpyruvate + H2O = 3-deoxy-alpha-D-manno-2-octulosonate-8-phosphate + phosphate. The protein operates within carbohydrate biosynthesis; 3-deoxy-D-manno-octulosonate biosynthesis; 3-deoxy-D-manno-octulosonate from D-ribulose 5-phosphate: step 2/3. It participates in bacterial outer membrane biogenesis; lipopolysaccharide biosynthesis. The sequence is that of 2-dehydro-3-deoxyphosphooctonate aldolase from Shewanella piezotolerans (strain WP3 / JCM 13877).